The chain runs to 190 residues: dCTP deaminase (190 aa).

Residues 113–118 (KSTYAR), 137–139 (TLE), glutamine 158, tyrosine 172, and glutamine 182 each bind dCTP. Glutamate 139 serves as the catalytic Proton donor/acceptor.

Belongs to the dCTP deaminase family. In terms of assembly, homotrimer.

It carries out the reaction dCTP + H2O + H(+) = dUTP + NH4(+). The protein operates within pyrimidine metabolism; dUMP biosynthesis; dUMP from dCTP (dUTP route): step 1/2. Catalyzes the deamination of dCTP to dUTP. This chain is dCTP deaminase, found in Chromobacterium violaceum (strain ATCC 12472 / DSM 30191 / JCM 1249 / CCUG 213 / NBRC 12614 / NCIMB 9131 / NCTC 9757 / MK).